We begin with the raw amino-acid sequence, 534 residues long: NEDD8-activating enzyme E1 regulatory subunit (534 aa).

Ala2 is modified (N-acetylalanine). Residues Lys6 and Lys341 each carry the N6-acetyllysine modification. Positions 331 to 344 are interaction with UBA3; that stretch reads DMIADSNKYIKLQN.

The protein belongs to the ubiquitin-activating E1 family. ULA1 subfamily. As to quaternary structure, heterodimer of UBA3 and NAE1. The complex binds NEDD8 and UBE2M. Binds APP and TP53BP2. Post-translationally, ubiquitinated by TRIP12, leading to its degradation by the proteasome. In terms of tissue distribution, expressed throughout the brain. In hippocampus, strongly expressed in granule cells and in the pyramidal cell layer. Strongly expressed in the piriform cortex. In the cerebellum, expressed only in Purkinje cells.

It localises to the cell membrane. Its pathway is protein modification; protein neddylation. With respect to regulation, binding of TP53BP2 to the regulatory subunit NAE1 decreases neddylation activity. In terms of biological role, regulatory subunit of the dimeric UBA3-NAE1 E1 enzyme. E1 activates NEDD8 by first adenylating its C-terminal glycine residue with ATP, thereafter linking this residue to the side chain of the catalytic cysteine, yielding a NEDD8-UBA3 thioester and free AMP. E1 finally transfers NEDD8 to the catalytic cysteine of UBE2M. Necessary for cell cycle progression through the S-M checkpoint. Overexpression of NAE1 causes apoptosis through deregulation of NEDD8 conjugation. The covalent attachment of NEDD8 to target proteins is known as 'neddylation' and the process is involved in the regulation of cell growth, viability and development. The sequence is that of NEDD8-activating enzyme E1 regulatory subunit (Nae1) from Rattus norvegicus (Rat).